A 286-amino-acid chain; its full sequence is Secretory carrier-associated membrane protein 2 (286 aa).

Basic and acidic residues-rich tracts occupy residues 1–10 (MAGRYDRNPF) and 54–63 (STKDMKKKEK). The interval 1 to 63 (MAGRYDRNPF…STKDMKKKEK (63 aa)) is disordered. Residues 1 to 126 (MAGRYDRNPF…LQRMQYLAFS (126 aa)) are Cytoplasmic-facing. The stretch at 52–89 (LDSTKDMKKKEKELQAKEAELNKRESELRRREEAASRA) forms a coiled coil. A run of 4 helical transmembrane segments spans residues 127–147 (SLLG…AAWI), 152–172 (VMIW…AYVL), 189–209 (FGWF…SAVA), and 237–257 (IFYF…VVVI). Residues 258–286 (QQVYMYFRGSGKAAEMKREAARGAMRSAF) lie on the Cytoplasmic side of the membrane.

This sequence belongs to the SCAMP family.

It localises to the cell membrane. Its subcellular location is the cytoplasmic vesicle. It is found in the secretory vesicle membrane. Functionally, probably involved in membrane trafficking. In Oryza sativa subsp. japonica (Rice), this protein is Secretory carrier-associated membrane protein 2 (SCAMP2).